We begin with the raw amino-acid sequence, 2152 residues long: Oxygen-regulated protein 1 (2152 aa).

Positions 1 to 19 (MSDTPSTGFSIIHPTSSED) are enriched in polar residues. The disordered stretch occupies residues 1–25 (MSDTPSTGFSIIHPTSSEDQVPPPR). Doublecortin domains lie at 36–118 (KRIS…VDLD) and 154–233 (RSLV…GNYD). Disordered stretches follow at residues 353 to 375 (VSKT…RTES), 1435 to 1455 (DMEE…MTSS), and 1587 to 1616 (DWSD…ELAQ).

As to quaternary structure, interacts (via the doublecortin domains) with microtubules. Interacts with RP1L1. Interacts with MAK.

It localises to the cytoplasm. The protein resides in the cytoskeleton. Its subcellular location is the cilium axoneme. It is found in the cell projection. The protein localises to the cilium. It localises to the photoreceptor outer segment. Functionally, microtubule-associated protein regulating the stability and length of the microtubule-based axoneme of photoreceptors. Required for the differentiation of photoreceptor cells, it plays a role in the organization of the outer segment of rod and cone photoreceptors ensuring the correct orientation and higher-order stacking of outer segment disks along the photoreceptor axoneme. The chain is Oxygen-regulated protein 1 (RP1) from Papio hamadryas (Hamadryas baboon).